The chain runs to 1169 residues: Chromosome partition protein Smc (1169 aa).

32–39 (PNGSGKSN) lines the ATP pocket. Positions 166–507 (DEISGIAEFD…RIKALKEMEE (342 aa)) form a coiled coil. The SMC hinge domain maps to 523 to 636 (PGIIDIVGNL…ENIDIAKELA (114 aa)). Residues 676–1030 (SKLNKIADEI…NKKKEVFMEV (355 aa)) are a coiled coil.

It belongs to the SMC family. Homodimer.

It localises to the cytoplasm. Functionally, required for chromosome condensation and partitioning. The chain is Chromosome partition protein Smc from Methanocaldococcus jannaschii (strain ATCC 43067 / DSM 2661 / JAL-1 / JCM 10045 / NBRC 100440) (Methanococcus jannaschii).